Reading from the N-terminus, the 380-residue chain is Apolipoprotein A-IV (380 aa).

Positions 1 to 20 (MFLKAVVLSLALVAVTGAEA) are cleaved as a signal peptide. Repeat copies occupy residues 33–54 (DYFS…KSEL), 60–81 (TLFQ…KKLV), 82–103 (PFAT…EEIR), 115–136 (PHAT…QRLG), 137–158 (PYAE…RQLT), 159–180 (PYVE…ASLA), 181–202 (PYAE…GRLT), 203–224 (PYAD…RSLA), 225–246 (PYAQ…FQMK), 247–268 (KHAE…QGLV), 269–286 (PLVN…EDLQ), 287–308 (KSLA…RTVG), and 309–330 (PYGE…QKLG). The 13 X 22 AA approximate tandem repeats stretch occupies residues 33 to 330 (DYFSQLGNNA…QLDTLRQKLG (298 aa)). A disordered region spans residues 361-380 (KESQAPALPAQEEMPVPLGG).

It belongs to the apolipoprotein A1/A4/E family. In terms of assembly, homodimer. In terms of tissue distribution, secreted in plasma.

It localises to the secreted. May have a role in chylomicrons and VLDL secretion and catabolism. Required for efficient activation of lipoprotein lipase by ApoC-II; potent activator of LCAT. Apoa-IV is a major component of HDL and chylomicrons. The chain is Apolipoprotein A-IV (APOA4) from Bos taurus (Bovine).